The following is a 20-amino-acid chain: Fibrinogen beta chain (20 aa).

The disordered stretch occupies residues 1–20 (ATDYEDEEFPGAVPPSVGAR). A glycan (O-linked (GalNAc...) threonine) is linked at threonine 2. Tyrosine 4 carries the post-translational modification Sulfotyrosine.

As to quaternary structure, heterohexamer; disulfide linked. Contains 2 sets of 3 non-identical chains (alpha, beta and gamma). The 2 heterotrimers are in head to head conformation with the N-termini in a small central domain. In terms of processing, conversion of fibrinogen to fibrin is triggered by thrombin, which cleaves fibrinopeptides A and B from alpha and beta chains, and thus exposes the N-terminal polymerization sites responsible for the formation of the soft clot.

It is found in the secreted. In terms of biological role, cleaved by the protease thrombin to yield monomers which, together with fibrinogen alpha (FGA) and fibrinogen gamma (FGG), polymerize to form an insoluble fibrin matrix. Fibrin has a major function in hemostasis as one of the primary components of blood clots. In addition, functions during the early stages of wound repair to stabilize the lesion and guide cell migration during re-epithelialization. Was originally thought to be essential for platelet aggregation, based on in vitro studies using anticoagulated blood. However subsequent studies have shown that it is not absolutely required for thrombus formation in vivo. Enhances expression of SELP in activated platelets. Maternal fibrinogen is essential for successful pregnancy. Fibrin deposition is also associated with infection, where it protects against IFNG-mediated hemorrhage. May also facilitate the antibacterial immune response via both innate and T-cell mediated pathways. The polypeptide is Fibrinogen beta chain (FGB) (Elephas maximus (Indian elephant)).